The chain runs to 215 residues: 2-phospho-L-lactate guanylyltransferase (215 aa).

Belongs to the CofC family. As to quaternary structure, homodimer.

The enzyme catalyses (2S)-2-phospholactate + GTP + H(+) = (2S)-lactyl-2-diphospho-5'-guanosine + diphosphate. It participates in cofactor biosynthesis; coenzyme F420 biosynthesis. Its function is as follows. Guanylyltransferase that catalyzes the activation of (2S)-2-phospholactate (2-PL) as (2S)-lactyl-2-diphospho-5'-guanosine, via the condensation of 2-PL with GTP. It is involved in the biosynthesis of coenzyme F420, a hydride carrier cofactor. The protein is 2-phospho-L-lactate guanylyltransferase of Methanococcoides burtonii (strain DSM 6242 / NBRC 107633 / OCM 468 / ACE-M).